Reading from the N-terminus, the 307-residue chain is Acyl transferase (307 aa).

Active-site charge relay system residues include Ser-116, Asp-213, and His-243.

This sequence belongs to the LuxD family.

Its pathway is lipid metabolism; fatty acid reduction for biolumincescence. In terms of biological role, acyl transferase is part of the fatty acid reductase system required for aldehyde biosynthesis; it produces fatty acids for the luminescent reaction. This chain is Acyl transferase, found in Photorhabdus luminescens (Xenorhabdus luminescens).